Reading from the N-terminus, the 869-residue chain is Bifunctional uridylyltransferase/uridylyl-removing enzyme (869 aa).

The segment at 1 to 332 (MTATPADRPD…QFDGEAVPVQ (332 aa)) is uridylyltransferase. A uridylyl-removing region spans residues 333 to 691 (LDAGFSLRRG…RRAVPDNDAL (359 aa)). The region spanning 450-572 (VDQHTLMVLR…VGTRERLDYL (123 aa)) is the HD domain. 2 consecutive ACT domains span residues 692–771 (EVFV…PSRR) and 798–869 (RISL…LDPT).

This sequence belongs to the GlnD family. The cofactor is Mg(2+).

It carries out the reaction [protein-PII]-L-tyrosine + UTP = [protein-PII]-uridylyl-L-tyrosine + diphosphate. It catalyses the reaction [protein-PII]-uridylyl-L-tyrosine + H2O = [protein-PII]-L-tyrosine + UMP + H(+). With respect to regulation, uridylyltransferase (UTase) activity is inhibited by glutamine, while glutamine activates uridylyl-removing (UR) activity. In terms of biological role, modifies, by uridylylation and deuridylylation, the PII regulatory proteins (GlnB and homologs), in response to the nitrogen status of the cell that GlnD senses through the glutamine level. Under low glutamine levels, catalyzes the conversion of the PII proteins and UTP to PII-UMP and PPi, while under higher glutamine levels, GlnD hydrolyzes PII-UMP to PII and UMP (deuridylylation). Thus, controls uridylylation state and activity of the PII proteins, and plays an important role in the regulation of nitrogen assimilation and metabolism. This chain is Bifunctional uridylyltransferase/uridylyl-removing enzyme, found in Xanthomonas campestris pv. campestris (strain 8004).